Here is a 356-residue protein sequence, read N- to C-terminus: UDP-3-O-acylglucosamine N-acyltransferase (356 aa).

His-242 acts as the Proton acceptor in catalysis.

Belongs to the transferase hexapeptide repeat family. LpxD subfamily. Homotrimer.

It catalyses the reaction a UDP-3-O-[(3R)-3-hydroxyacyl]-alpha-D-glucosamine + a (3R)-hydroxyacyl-[ACP] = a UDP-2-N,3-O-bis[(3R)-3-hydroxyacyl]-alpha-D-glucosamine + holo-[ACP] + H(+). It functions in the pathway bacterial outer membrane biogenesis; LPS lipid A biosynthesis. Functionally, catalyzes the N-acylation of UDP-3-O-acylglucosamine using 3-hydroxyacyl-ACP as the acyl donor. Is involved in the biosynthesis of lipid A, a phosphorylated glycolipid that anchors the lipopolysaccharide to the outer membrane of the cell. This is UDP-3-O-acylglucosamine N-acyltransferase from Acinetobacter baumannii (strain AB0057).